The chain runs to 398 residues: Ornithine aminotransferase (398 aa).

N6-(pyridoxal phosphate)lysine is present on K255.

The protein belongs to the class-III pyridoxal-phosphate-dependent aminotransferase family. OAT subfamily. The cofactor is pyridoxal 5'-phosphate.

Its subcellular location is the cytoplasm. The catalysed reaction is a 2-oxocarboxylate + L-ornithine = L-glutamate 5-semialdehyde + an L-alpha-amino acid. The protein operates within amino-acid biosynthesis; L-proline biosynthesis; L-glutamate 5-semialdehyde from L-ornithine: step 1/1. In terms of biological role, catalyzes the interconversion of ornithine to glutamate semialdehyde. The polypeptide is Ornithine aminotransferase (Geobacillus sp. (strain WCH70)).